The following is an 83-amino-acid chain: Small ribosomal subunit protein eS21 (83 aa).

The protein belongs to the eukaryotic ribosomal protein eS21 family. As to quaternary structure, component of the 40S small ribosomal subunit.

The protein resides in the cytoplasm. Its subcellular location is the cytosol. It is found in the rough endoplasmic reticulum. Its function is as follows. Component of the small ribosomal subunit. The ribosome is a large ribonucleoprotein complex responsible for the synthesis of proteins in the cell. The protein is Small ribosomal subunit protein eS21 (rps21) of Ictalurus punctatus (Channel catfish).